The following is a 238-amino-acid chain: Cadherin-2 (238 aa).

Cadherin domains follow at residues 1–46 (TKPL…RPEF), 47–161 (LHQV…PPEF), and 162–238 (TAMT…RMFV). Residues 1-238 (TKPLDRELIA…IDFETNRMFV (238 aa)) lie on the Extracellular side of the membrane. Ca(2+) contacts are provided by Asp5, Glu7, Asp38, Met39, Asn40, Asp41, and Asn42. Residue Asn52 is glycosylated (N-linked (GlcNAc...) asparagine). The Ca(2+) site is built by Asp72, Asp74, and Asn80. The N-linked (GlcNAc...) asparagine glycan is linked to Asn104. Residue Asp132 coordinates Ca(2+). Asn181 carries N-linked (GlcNAc...) asparagine glycosylation.

As to quaternary structure, homodimer (via extracellular region). Can also form heterodimers with other cadherins (via extracellular region). Dimerization occurs in trans, i.e. with a cadherin chain from another cell. Interacts with CDCP1. Interacts with PCDH8; this complex may also include TAOK2. The interaction with PCDH8 may lead to internalization through TAOK2/p38 MAPK pathway. Identified in a complex containing FGFR4, NCAM1, CDH2, PLCG1, FRS2, SRC, SHC1, GAP43 and CTTN. May interact with OBSCN (via protein kinase domain 2). In terms of processing, cleaved by MMP24. Ectodomain cleavage leads to the generation of a soluble 90 kDa N-terminal soluble fragment and a 45 kDa membrane-bound C-terminal fragment 1 (CTF1), which is further cleaved by gamma-secretase into a 35 kDa. Cleavage in neural stem cells by MMP24 affects CDH2-mediated anchorage of neural stem cells to ependymocytes in the adult subependymal zone, leading to modulate neural stem cell quiescence. Post-translationally, may be phosphorylated by OBSCN.

It is found in the cell membrane. It localises to the sarcolemma. Its subcellular location is the cell junction. The protein resides in the cell surface. The protein localises to the desmosome. It is found in the adherens junction. Its function is as follows. Calcium-dependent cell adhesion protein; preferentially mediates homotypic cell-cell adhesion by dimerization with a CDH2 chain from another cell. Cadherins may thus contribute to the sorting of heterogeneous cell types. Acts as a regulator of neural stem cells quiescence by mediating anchorage of neural stem cells to ependymocytes in the adult subependymal zone: upon cleavage by MMP24, CDH2-mediated anchorage is affected, leading to modulate neural stem cell quiescence. Plays a role in cell-to-cell junction formation between pancreatic beta cells and neural crest stem (NCS) cells, promoting the formation of processes by NCS cells. Required for proper neurite branching. Required for pre- and postsynaptic organization. CDH2 may be involved in neuronal recognition mechanism. In hippocampal neurons, may regulate dendritic spine density. The sequence is that of Cadherin-2 (CDH2) from Cricetulus griseus (Chinese hamster).